Consider the following 656-residue polypeptide: Putative cysteine-rich receptor-like protein kinase 32 (656 aa).

An N-terminal signal peptide occupies residues 1-23 (MCLQNLLSILCFVLAISFGYVSA). Gnk2-homologous domains follow at residues 24 to 126 (QKCV…NSSF) and 134 to 238 (PTMV…GSEY). Topologically, residues 24-262 (QKCVDSMFFR…PDGKTISTGA (239 aa)) are extracellular. N35, N52, N61, N103, and N123 each carry an N-linked (GlcNAc...) asparagine glycan. The helical transmembrane segment at 263–283 (IVAVVVSVVIFVVLLALVLVI) threads the bilayer. The Cytoplasmic portion of the chain corresponds to 284–656 (RKRRQSYKTL…SASITRVTPR (373 aa)). A Protein kinase domain is found at 321-606 (FSRNNKLGKG…IFQMLTNSSI (286 aa)). ATP contacts are provided by residues 327–335 (LGKGGFGEV) and K349. Y394 carries the phosphotyrosine modification. Residue D454 is the Proton acceptor of the active site. Phosphoserine is present on S458. T494 bears the Phosphothreonine mark. Y502 is modified (phosphotyrosine).

It belongs to the protein kinase superfamily. Ser/Thr protein kinase family. CRK subfamily.

Its subcellular location is the membrane. The catalysed reaction is L-seryl-[protein] + ATP = O-phospho-L-seryl-[protein] + ADP + H(+). It carries out the reaction L-threonyl-[protein] + ATP = O-phospho-L-threonyl-[protein] + ADP + H(+). The protein is Putative cysteine-rich receptor-like protein kinase 32 (CRK32) of Arabidopsis thaliana (Mouse-ear cress).